The primary structure comprises 240 residues: MRIIPAIDIIEGKCVRLSKGDYDTKIIYNENPLEVAKSFEAYGIEYLHLVDLDGAKSSKIVNYKILEQIATQTSLKIDFGGGLKSDDDLRIAFESGANQITGGSIAVKNRTIFEKWISEYGSEKIILGADAKDEKIAVSGWLEESNEDLVPFIQDYQNKGIQYVICTDIAKDGMLQGPSFDLYSKILAEAKGVKLIASGGISTFDELPKLAELGCEGTIIGKAIYEGRITLKQLENYIIG.

The Proton acceptor role is filled by Asp-8. The active-site Proton donor is the Asp-130.

Belongs to the HisA/HisF family.

The protein resides in the cytoplasm. It carries out the reaction 1-(5-phospho-beta-D-ribosyl)-5-[(5-phospho-beta-D-ribosylamino)methylideneamino]imidazole-4-carboxamide = 5-[(5-phospho-1-deoxy-D-ribulos-1-ylimino)methylamino]-1-(5-phospho-beta-D-ribosyl)imidazole-4-carboxamide. It functions in the pathway amino-acid biosynthesis; L-histidine biosynthesis; L-histidine from 5-phospho-alpha-D-ribose 1-diphosphate: step 4/9. The chain is 1-(5-phosphoribosyl)-5-[(5-phosphoribosylamino)methylideneamino] imidazole-4-carboxamide isomerase from Flavobacterium johnsoniae (strain ATCC 17061 / DSM 2064 / JCM 8514 / BCRC 14874 / CCUG 350202 / NBRC 14942 / NCIMB 11054 / UW101) (Cytophaga johnsonae).